The sequence spans 960 residues: Testis anion transporter 1 (960 aa).

Residues 1–93 are Cytoplasmic-facing; sequence MQPDRSFQSF…YRFKDWLLGD (93 aa). The helical transmembrane segment at 94 to 114 threads the bilayer; that stretch reads LLAGISVGLVQIPQVLMLGLL. Topologically, residues 115 to 117 are extracellular; it reads ARH. The helical transmembrane segment at 118–138 threads the bilayer; that stretch reads LIPPLNVSYAAFCASVIYGIF. Position 139 (Gly-139) is a topological domain, cytoplasmic. Residues 140 to 160 form a helical membrane-spanning segment; the sequence is SCHQMSIGTFFLVSALAINVL. At 161 to 201 the chain is on the extracellular side; the sequence is RTQPFNRGHLLLGTFIQADFSNTSFYENYNRSLSSVASVTL. A glycan (N-linked (GlcNAc...) asparagine) is linked at Asn-190. 2 consecutive transmembrane segments (helical) span residues 202 to 222 and 223 to 243; these read LTGI…VAYI and PEAA…LSQL. Topologically, residues 244 to 268 are cytoplasmic; it reads TCIFGIMISYNSGPIAFFYNIINYC. The chain crosses the membrane as a helical span at residues 269–289; that stretch reads LGLPKANSTSILLFLTAMVAL. Topologically, residues 290–353 are extracellular; it reads RINKCIRISF…PVTPDMSNLT (64 aa). Residues 354 to 374 traverse the membrane as a helical segment; that stretch reads EVLIESFSLALVSSSLLVFLG. Residues 375–390 lie on the Cytoplasmic side of the membrane; the sequence is KKIASFHNYDVNSNQD. The helical transmembrane segment at 391 to 411 threads the bilayer; sequence LIAIGLCNVVSSFFRSYVFTG. The Extracellular segment spans residues 412–427; the sequence is AVARTIIQDKTGGRQQ. The chain crosses the membrane as a helical span at residues 428–448; the sequence is FASLVGAGIMLLLMMKMARFF. Over 449–453 the chain is Cytoplasmic; it reads YRLPN. Residues 454 to 474 form a helical membrane-spanning segment; that stretch reads AIVAGIILSNVLPYLEAVYTL. At 475-494 the chain is on the extracellular side; it reads PSLWRQNQYDCLIWMVTFMS. A helical membrane pass occupies residues 495 to 515; sequence AILLGLDIGLVVAVTFAFFII. The Cytoplasmic segment spans residues 516–960; it reads TVQSHRTKIL…ADTSEDALEI (445 aa). The STAS domain occupies 541-792; that stretch reads DYREVANIPG…LTLHDAVLFA (252 aa). Positions 662–957 are interaction with RACGAP1; the sequence is ITSSSSQRNP…TSKADTSEDA (296 aa). Disordered stretches follow at residues 807-857 and 881-960; these read ESET…EESD and EVEP…ALEI. Over residues 818 to 827 the composition is skewed to basic and acidic residues; sequence ETDKKEESRH. Residues 884 to 904 show a composition bias toward acidic residues; it reads PESELEPESELDQETELEPEP. Polar residues predominate over residues 926–935; that stretch reads SPTQTQARTQ.

This sequence belongs to the SLC26A/SulP transporter (TC 2.A.53) family. In terms of assembly, interacts with RACGAP1. Interacts with CFTR; stimulates anion transport activity of CFTR. Post-translationally, N-glycosylated.

The protein resides in the membrane. The enzyme catalyses sulfate(out) + chloride(in) = sulfate(in) + chloride(out). It catalyses the reaction oxalate(in) + chloride(out) = oxalate(out) + chloride(in). Its function is as follows. Antiporter that mediates the exchange of sulfate and oxalate against chloride ions across a membrane. Stimulates anion transport activity of CFTR. May cooperate with CFTR in the regulation of chloride and bicarbonate ions fluxes required for activation of the ADCY10/PKA pathway during sperm motility and sperm capacitation. May play a role in sperm tail differentiation and motility and hence male fertility. The polypeptide is Testis anion transporter 1 (Bos taurus (Bovine)).